The sequence spans 281 residues: tRNA dimethylallyltransferase (281 aa).

Interaction with substrate tRNA stretches follow at residues 13–16 (DSAQ) and 133–137 (QRITR).

This sequence belongs to the IPP transferase family. Monomer. Requires Mg(2+) as cofactor.

It catalyses the reaction adenosine(37) in tRNA + dimethylallyl diphosphate = N(6)-dimethylallyladenosine(37) in tRNA + diphosphate. In terms of biological role, catalyzes the transfer of a dimethylallyl group onto the adenine at position 37 in tRNAs that read codons beginning with uridine, leading to the formation of N6-(dimethylallyl)adenosine (i(6)A). The sequence is that of tRNA dimethylallyltransferase from Novosphingobium aromaticivorans (strain ATCC 700278 / DSM 12444 / CCUG 56034 / CIP 105152 / NBRC 16084 / F199).